Consider the following 656-residue polypeptide: PAN2-PAN3 deadenylation complex subunit PAN3 (656 aa).

Residues 15 to 44 form a C3H1-type zinc finger; the sequence is SFKGTQCRNIIIHGYCKFENEGCQFNHGNS. Positions 71–104 are disordered; sequence KTSSSFTPGKSPAVRSPDFSSLPAFQPGAPVNDQ. The PABPC-interacting motif-2 (PAM-2) motif lies at 128–148; that stretch reads AFAPSFNPYASESFTPSVSAG. The pseudokinase domain stretch occupies residues 271-525; it reads QVFPRGSLPD…NIEDFTKLFS (255 aa). Residues arginine 325, 375 to 382, and 428 to 429 contribute to the ATP site; these read DYYPQSQS and KK. Positions 526–564 form a coiled coil; the sequence is HKVLSVVNSLQYNSEYLEQQLSRELENARLFRLMCKLNA. Positions 565–656 are knob domain; sequence IYGRLESRID…IDSTFRALTQ (92 aa).

Belongs to the protein kinase superfamily. PAN3 family. As to quaternary structure, homodimer. Forms a heterotrimer with a catalytic subunit PAN2 to form the poly(A)-nuclease (PAN) deadenylation complex. Interacts (via PAM-2 motif) with poly(A)-binding protein PAB1 (via PABC domain), conferring substrate specificity of the enzyme complex.

The protein localises to the cytoplasm. Its function is as follows. Regulatory subunit of the poly(A)-nuclease (PAN) deadenylation complex, one of two cytoplasmic mRNA deadenylases involved in mRNA turnover. PAN specifically shortens poly(A) tails of RNA and the activity is stimulated by poly(A)-binding protein PAB1. PAN deadenylation is followed by rapid degradation of the shortened mRNA tails by the CCR4-NOT complex. Deadenylated mRNAs are then degraded by two alternative mechanisms, namely exosome-mediated 3'-5' exonucleolytic degradation, or deadenylation-dependent mRNA decaping and subsequent 5'-3' exonucleolytic degradation by XRN1. May also be involved in post-transcriptional maturation of mRNA poly(A) tails. PAN3 acts as a positive regulator for PAN activity, recruiting the catalytic subunit PAN2 to mRNA via its interaction with RNA and with PAB1. This Kluyveromyces lactis (strain ATCC 8585 / CBS 2359 / DSM 70799 / NBRC 1267 / NRRL Y-1140 / WM37) (Yeast) protein is PAN2-PAN3 deadenylation complex subunit PAN3.